A 266-amino-acid polypeptide reads, in one-letter code: uncharacterized protein (266 aa).

Ser-176 is modified (phosphoserine). Thr-178 carries the post-translational modification Phosphothreonine.

This is an uncharacterized protein from Schizosaccharomyces pombe (strain 972 / ATCC 24843) (Fission yeast).